Consider the following 529-residue polypeptide: Ribonuclease Y (529 aa).

The chain crosses the membrane as a helical span at residues 4–24 (GLIYISLEVLVACLITALIMY). In terms of domain architecture, KH spans 216-297 (LTSRIALPCS…NRIEEVYHRV (82 aa)). Residues 342–435 (ALQHSKEVAL…VCAADALSAG (94 aa)) enclose the HD domain.

It belongs to the RNase Y family.

The protein resides in the cell membrane. Functionally, endoribonuclease that initiates mRNA decay. The sequence is that of Ribonuclease Y from Helicobacter pylori (strain J99 / ATCC 700824) (Campylobacter pylori J99).